Here is a 416-residue protein sequence, read N- to C-terminus: Tyrosine--tRNA ligase (416 aa).

Residue Tyr40 coordinates L-tyrosine. Positions 45–54 (ATAASLHVGH) match the 'HIGH' region motif. Residues Tyr177 and Gln181 each coordinate L-tyrosine. A 'KMSKS' region motif is present at residues 237-241 (KMGKS). An ATP-binding site is contributed by Lys240. The region spanning 351 to 416 (LSVAHFLVAA…RKKHKLVRLS (66 aa)) is the S4 RNA-binding domain.

It belongs to the class-I aminoacyl-tRNA synthetase family. TyrS type 1 subfamily. Homodimer.

The protein resides in the cytoplasm. The enzyme catalyses tRNA(Tyr) + L-tyrosine + ATP = L-tyrosyl-tRNA(Tyr) + AMP + diphosphate + H(+). In terms of biological role, catalyzes the attachment of tyrosine to tRNA(Tyr) in a two-step reaction: tyrosine is first activated by ATP to form Tyr-AMP and then transferred to the acceptor end of tRNA(Tyr). In Cereibacter sphaeroides (strain KD131 / KCTC 12085) (Rhodobacter sphaeroides), this protein is Tyrosine--tRNA ligase.